Reading from the N-terminus, the 41-residue chain is Antimicrobial protein PN-AMP1 (41 aa).

Gln-1 carries the post-translational modification Pyrrolidone carboxylic acid. Positions 1–41 (QQCGRQASGRLCGNRLCCSQWGYCGSTASYCGAGCQSQCRS) constitute a Chitin-binding type-1 domain. 4 disulfides stabilise this stretch: Cys-3/Cys-18, Cys-12/Cys-24, Cys-17/Cys-31, and Cys-35/Cys-39.

In terms of biological role, chitin-binding protein with a defensive function against numerous chitin containing fungal pathogens. It is also an inhibitor of Gram-positive bacteria such as B.subtilis. This chain is Antimicrobial protein PN-AMP1, found in Ipomoea nil (Japanese morning glory).